A 105-amino-acid chain; its full sequence is MRKIKRNDEVIVIAGKDKGKRGKVVKVVGENRVLVSGVNTVKKHEKPNPMKGSTGGIVEQEAPIQVSNVAIYNSATGKADRVGFKLNEDGTKVRVFKSNSEAIDA.

It belongs to the universal ribosomal protein uL24 family. In terms of assembly, part of the 50S ribosomal subunit.

One of two assembly initiator proteins, it binds directly to the 5'-end of the 23S rRNA, where it nucleates assembly of the 50S subunit. In terms of biological role, one of the proteins that surrounds the polypeptide exit tunnel on the outside of the subunit. The sequence is that of Large ribosomal subunit protein uL24 from Marinomonas sp. (strain MWYL1).